The sequence spans 482 residues: Major cardiolipin synthase ClsA (482 aa).

Transmembrane regions (helical) follow at residues 3–23 (ISSI…IIVI) and 34–54 (WAWL…YLLF). 2 consecutive PLD phosphodiesterase domains span residues 217-244 (LNYR…GDEY) and 395-422 (DNGF…DVRS). Catalysis depends on residues histidine 222, lysine 224, aspartate 229, histidine 400, lysine 402, and aspartate 407.

The protein belongs to the phospholipase D family. Cardiolipin synthase subfamily.

The protein resides in the cell membrane. It carries out the reaction 2 a 1,2-diacyl-sn-glycero-3-phospho-(1'-sn-glycerol) = a cardiolipin + glycerol. Its function is as follows. Catalyzes the reversible phosphatidyl group transfer from one phosphatidylglycerol molecule to another to form cardiolipin (CL) (diphosphatidylglycerol) and glycerol. The chain is Major cardiolipin synthase ClsA (clsA) from Bacillus subtilis (strain 168).